We begin with the raw amino-acid sequence, 216 residues long: MASLSSNLKTLMTSVHINASELARRTGIAQPIIHRLSTGQNTNPKLATIKPIARYFMVNISQLIGEEPLPSDQSPQITGNYRAWNRVPLISWKDATSWPEALPHYQTSDEVMYISTDANVSKLAYGLIIQGCAMEPLFPNGTTIIVEPERKPKDRDFVVVRLQGEPEARLRQIITEGNDRYLKSLNPELEKLEVARLAQEDQFLGVMAQAKVDFLR.

An HTH cro/C1-type domain is found at 8–63 (LKTLMTSVHINASELARRTGIAQPIIHRLSTGQNTNPKLATIKPIARYFMVNISQL). A DNA-binding region (H-T-H motif) is located at residues 19 to 38 (ASELARRTGIAQPIIHRLST).

This is an uncharacterized protein from Coxiella burnetii (strain RSA 493 / Nine Mile phase I).